The primary structure comprises 534 residues: ATP-dependent rRNA helicase RRP3 (534 aa).

Residues 67–107 are disordered; that stretch reads KQQALQKQQKQQKQQEQENANHNQTESSLSSSSSTTSSSIT. Low complexity-rich tracts occupy residues 68–80 and 91–107; these read QQAL…QQKQ and TESS…SSIT. Residues 118–146 carry the Q motif motif; it reads KTFKELNLVPDLLESIESMKFTKPTPIQS. In terms of domain architecture, Helicase ATP-binding spans 149-320; the sequence is IPHALEGKDI…RASLHNPVRV (172 aa). 162–169 lines the ATP pocket; the sequence is AQTGSGKT. A DEAD box motif is present at residues 268–271; the sequence is DEAD. Residues 347-492 form the Helicase C-terminal domain; that stretch reads ILIHLLNEFM…EDKPPKEVLD (146 aa). Basic and acidic residues-rich tracts occupy residues 505-517 and 525-534; these read AIRQ…DKRN and NRDDADREER. The disordered stretch occupies residues 505–534; that stretch reads AIRQTKEIHDKRNGGGGRRRNRDDADREER.

Belongs to the DEAD box helicase family. DDX47/RRP3 subfamily. Interacts with the SSU processome.

The protein resides in the nucleus. It carries out the reaction ATP + H2O = ADP + phosphate + H(+). In terms of biological role, ATP-dependent rRNA helicase required for pre-ribosomal RNA processing. Involved in the maturation of the 35S-pre-rRNA and to its cleavage to mature 18S rRNA. The chain is ATP-dependent rRNA helicase RRP3 from Candida albicans (strain SC5314 / ATCC MYA-2876) (Yeast).